A 162-amino-acid polypeptide reads, in one-letter code: Interleukin-15 (162 aa).

The signal sequence occupies residues 1–29; sequence MKILKPYMRNTSISCYLCFLLNSHFLTEA. Positions 30-48 are excised as a propeptide; the sequence is GIHVFILGCVSVGLPKTEA. 2 disulfides stabilise this stretch: Cys83/Cys133 and Cys90/Cys136. Residues Asn104, Asn108, and Asn119 are each glycosylated (N-linked (GlcNAc...) asparagine).

This sequence belongs to the IL-15/IL-21 family.

The protein resides in the secreted. In terms of biological role, cytokine that plays a major role in the development of inflammatory and protective immune responses to microbial invaders and parasites by modulating immune cells of both the innate and adaptive immune systems. Stimulates the proliferation and activation of natural killer cells, T-cells and B-cells and promotes the secretion of several cytokines. In monocytes, induces the production of IL8 and monocyte chemotactic protein 1/CCL2, two chemokines that attract neutrophils and monocytes respectively to sites of infection. Unlike most cytokines, which are secreted in soluble form, IL15 is expressed in association with its high affinity IL15RA on the surface of IL15-producing cells and delivers signals to target cells that express IL2RB and IL2RG receptor subunits. Binding to its receptor triggers the phosphorylation of JAK1 and JAK3 and the recruitment and subsequent phosphorylation of signal transducer and activator of transcription-3/STAT3 and STAT5. In mast cells, induces the rapid tyrosine phosphorylation of STAT6 and thereby controls mast cell survival and release of cytokines such as IL4. This Mus musculus (Mouse) protein is Interleukin-15 (Il15).